The primary structure comprises 539 residues: Phosphoenolpyruvate carboxykinase (ATP) (539 aa).

The substrate site is built by R59, Y200, and K206. Residues K206, H225, and 242–250 (GLSGTGKTT) each bind ATP. K206 and H225 together coordinate Mn(2+). D263 is a Mn(2+) binding site. Residues E291, R327, 447–448 (RI), and T453 each bind ATP. R327 provides a ligand contact to substrate.

This sequence belongs to the phosphoenolpyruvate carboxykinase (ATP) family. Requires Mn(2+) as cofactor.

The protein localises to the cytoplasm. The enzyme catalyses oxaloacetate + ATP = phosphoenolpyruvate + ADP + CO2. The protein operates within carbohydrate biosynthesis; gluconeogenesis. In terms of biological role, involved in the gluconeogenesis. Catalyzes the conversion of oxaloacetate (OAA) to phosphoenolpyruvate (PEP) through direct phosphoryl transfer between the nucleoside triphosphate and OAA. The chain is Phosphoenolpyruvate carboxykinase (ATP) from Selenomonas ruminantium.